Reading from the N-terminus, the 179-residue chain is Large ribosomal subunit protein uL6 (179 aa).

This sequence belongs to the universal ribosomal protein uL6 family. In terms of assembly, part of the 50S ribosomal subunit.

Its function is as follows. This protein binds to the 23S rRNA, and is important in its secondary structure. It is located near the subunit interface in the base of the L7/L12 stalk, and near the tRNA binding site of the peptidyltransferase center. The sequence is that of Large ribosomal subunit protein uL6 from Chlorobium phaeobacteroides (strain BS1).